The sequence spans 246 residues: Small ribosomal subunit protein uS2 (246 aa).

A disordered region spans residues 224–246 (AKQGEEEAEAAEETAPETETTTA). The span at 229-239 (EEAEAAEETAP) shows a compositional bias: acidic residues.

This sequence belongs to the universal ribosomal protein uS2 family.

This chain is Small ribosomal subunit protein uS2, found in Bacillus velezensis (strain DSM 23117 / BGSC 10A6 / LMG 26770 / FZB42) (Bacillus amyloliquefaciens subsp. plantarum).